A 441-amino-acid chain; its full sequence is Glutamyl-tRNA reductase (441 aa).

Substrate contacts are provided by residues 49–52 (TCNR), Ser109, 114–116 (EGQ), and Gln120. Cys50 functions as the Nucleophile in the catalytic mechanism. 198-203 (GAGRMS) contributes to the NADP(+) binding site.

It belongs to the glutamyl-tRNA reductase family. In terms of assembly, homodimer.

It catalyses the reaction (S)-4-amino-5-oxopentanoate + tRNA(Glu) + NADP(+) = L-glutamyl-tRNA(Glu) + NADPH + H(+). It participates in porphyrin-containing compound metabolism; protoporphyrin-IX biosynthesis; 5-aminolevulinate from L-glutamyl-tRNA(Glu): step 1/2. It functions in the pathway porphyrin-containing compound metabolism; chlorophyll biosynthesis. In terms of biological role, catalyzes the NADPH-dependent reduction of glutamyl-tRNA(Glu) to glutamate 1-semialdehyde (GSA). The chain is Glutamyl-tRNA reductase from Prochlorococcus marinus (strain NATL1A).